Here is a 913-residue protein sequence, read N- to C-terminus: Eukaryotic translation initiation factor 3 subunit C (913 aa).

The disordered stretch occupies residues 1–44 (MSRFFTTGSDSESESSLSGEELVTKPVGGNYGKQPLLLSEDEED). Low complexity predominate over residues 8–21 (GSDSESESSLSGEE). Phosphoserine is present on residues Ser-9, Ser-11, Ser-13, Ser-15, Ser-16, Ser-18, and Ser-39. Position 99 is an N6-acetyllysine (Lys-99). Disordered stretches follow at residues 157–301 (TSYK…GGEW) and 522–542 (QLTP…NEGE). 4 positions are modified to phosphoserine: Ser-166, Ser-178, Ser-181, and Ser-182. The segment covering 166–190 (SADEDAEKNEEDSEGSSDEDEDEDG) has biased composition (acidic residues). Over residues 199 to 216 (KKSEAPSGESRKFLKKMD) the composition is skewed to basic and acidic residues. Residues 217-232 (DEDEDSEDSEDDEDWD) are compositionally biased toward acidic residues. Positions 261 to 278 (PTTDEDKKAAEKKREDKA) are enriched in basic and acidic residues. Residues 522–531 (QLTPPEGSSK) are compositionally biased toward polar residues. A Phosphothreonine modification is found at Thr-524. At Lys-643 the chain carries N6-acetyllysine. The PCI domain occupies 673 to 849 (FHLHINLELL…QTVVMHRTEP (177 aa)). Residues 885–913 (FRDQKDGYRKNEGYMRRGGYRQQQSQTAY) form a disordered region. Residues 886–899 (RDQKDGYRKNEGYM) are compositionally biased toward basic and acidic residues. At Ser-909 the chain carries Phosphoserine.

The protein belongs to the eIF-3 subunit C family. As to quaternary structure, component of the eukaryotic translation initiation factor 3 (eIF-3) complex, which is composed of 13 subunits: EIF3A, EIF3B, EIF3C, EIF3D, EIF3E, EIF3F, EIF3G, EIF3H, EIF3I, EIF3J, EIF3K, EIF3L and EIF3M. The eIF-3 complex appears to include 3 stable modules: module A is composed of EIF3A, EIF3B, EIF3G and EIF3I; module B is composed of EIF3F, EIF3H, and EIF3M; and module C is composed of EIF3C, EIF3D, EIF3E, EIF3K and EIF3L. EIF3C of module C binds EIF3B of module A and EIF3H of module B, thereby linking the three modules. EIF3J is a labile subunit that binds to the eIF-3 complex via EIF3B. The eIF-3 complex interacts with RPS6KB1 under conditions of nutrient depletion. Mitogenic stimulation leads to binding and activation of a complex composed of MTOR and RPTOR, leading to phosphorylation and release of RPS6KB1 and binding of EIF4B to eIF-3. Interacts with ALKBH4, IFIT1 and IFIT2. Interacts with BZW2/5MP1. In terms of processing, phosphorylated. Phosphorylation is enhanced upon serum stimulation.

It is found in the cytoplasm. In terms of biological role, component of the eukaryotic translation initiation factor 3 (eIF-3) complex, which is required for several steps in the initiation of protein synthesis. The eIF-3 complex associates with the 40S ribosome and facilitates the recruitment of eIF-1, eIF-1A, eIF-2:GTP:methionyl-tRNAi and eIF-5 to form the 43S pre-initiation complex (43S PIC). The eIF-3 complex stimulates mRNA recruitment to the 43S PIC and scanning of the mRNA for AUG recognition. The eIF-3 complex is also required for disassembly and recycling of post-termination ribosomal complexes and subsequently prevents premature joining of the 40S and 60S ribosomal subunits prior to initiation. The eIF-3 complex specifically targets and initiates translation of a subset of mRNAs involved in cell proliferation, including cell cycling, differentiation and apoptosis, and uses different modes of RNA stem-loop binding to exert either translational activation or repression. This Pongo abelii (Sumatran orangutan) protein is Eukaryotic translation initiation factor 3 subunit C.